Consider the following 316-residue polypeptide: uncharacterized protein (316 aa).

Disordered regions lie at residues 82 to 105 (AMAA…SGGN) and 238 to 257 (ASVS…DTQE). Composition is skewed to low complexity over residues 84 to 96 (AAAS…SSGT) and 239 to 255 (SVSV…STDT).

Belongs to the MG307/MG309/MG338 family.

This is an uncharacterized protein from Mycoplasma pneumoniae (strain ATCC 29342 / M129 / Subtype 1) (Mycoplasmoides pneumoniae).